The primary structure comprises 960 residues: Isoleucine--tRNA ligase (960 aa).

Positions 60–70 (PYANGSLHIGH) match the 'HIGH' region motif. L-isoleucyl-5'-AMP is bound at residue Glu-573. Residues 614–618 (KMSKS) carry the 'KMSKS' region motif. ATP is bound at residue Lys-617. Residues Cys-929, Cys-932, Cys-949, and Cys-952 each contribute to the Zn(2+) site.

It belongs to the class-I aminoacyl-tRNA synthetase family. IleS type 1 subfamily. Monomer. It depends on Zn(2+) as a cofactor.

The protein resides in the cytoplasm. The catalysed reaction is tRNA(Ile) + L-isoleucine + ATP = L-isoleucyl-tRNA(Ile) + AMP + diphosphate. In terms of biological role, catalyzes the attachment of isoleucine to tRNA(Ile). As IleRS can inadvertently accommodate and process structurally similar amino acids such as valine, to avoid such errors it has two additional distinct tRNA(Ile)-dependent editing activities. One activity is designated as 'pretransfer' editing and involves the hydrolysis of activated Val-AMP. The other activity is designated 'posttransfer' editing and involves deacylation of mischarged Val-tRNA(Ile). This chain is Isoleucine--tRNA ligase, found in Nostoc sp. (strain PCC 7120 / SAG 25.82 / UTEX 2576).